A 427-amino-acid polypeptide reads, in one-letter code: 3-phosphoshikimate 1-carboxyvinyltransferase (427 aa).

3 residues coordinate 3-phosphoshikimate: K20, S21, and R25. K20 provides a ligand contact to phosphoenolpyruvate. Phosphoenolpyruvate contacts are provided by G92 and R120. 3-phosphoshikimate is bound by residues S166, Q168, D312, and K339. Q168 serves as a coordination point for phosphoenolpyruvate. Catalysis depends on D312, which acts as the Proton acceptor. The phosphoenolpyruvate site is built by R343 and R385.

It belongs to the EPSP synthase family. As to quaternary structure, monomer.

Its subcellular location is the cytoplasm. It carries out the reaction 3-phosphoshikimate + phosphoenolpyruvate = 5-O-(1-carboxyvinyl)-3-phosphoshikimate + phosphate. It functions in the pathway metabolic intermediate biosynthesis; chorismate biosynthesis; chorismate from D-erythrose 4-phosphate and phosphoenolpyruvate: step 6/7. Its function is as follows. Catalyzes the transfer of the enolpyruvyl moiety of phosphoenolpyruvate (PEP) to the 5-hydroxyl of shikimate-3-phosphate (S3P) to produce enolpyruvyl shikimate-3-phosphate and inorganic phosphate. This chain is 3-phosphoshikimate 1-carboxyvinyltransferase, found in Streptococcus thermophilus (strain ATCC BAA-491 / LMD-9).